The chain runs to 255 residues: Type III pantothenate kinase (255 aa).

Position 6–13 (6–13) interacts with ATP; it reads DIGNTNTV. Residues tyrosine 100 and 107–110 each bind substrate; that span reads GADR. The Proton acceptor role is filled by aspartate 109. Aspartate 129 contacts K(+). Threonine 132 lines the ATP pocket. Threonine 185 provides a ligand contact to substrate.

Belongs to the type III pantothenate kinase family. Homodimer. NH4(+) is required as a cofactor. The cofactor is K(+).

The protein resides in the cytoplasm. It carries out the reaction (R)-pantothenate + ATP = (R)-4'-phosphopantothenate + ADP + H(+). The protein operates within cofactor biosynthesis; coenzyme A biosynthesis; CoA from (R)-pantothenate: step 1/5. In terms of biological role, catalyzes the phosphorylation of pantothenate (Pan), the first step in CoA biosynthesis. This chain is Type III pantothenate kinase, found in Desulfosudis oleivorans (strain DSM 6200 / JCM 39069 / Hxd3) (Desulfococcus oleovorans).